Here is a 313-residue protein sequence, read N- to C-terminus: Cytochrome f (313 aa).

The first 30 residues, 1-30 (MRNWSFSKAALTVSLLALSWSPFGPAEVQA), serve as a signal peptide directing secretion. The heme site is built by Y31, C51, C54, and H55. Residues 279-298 (VQGLIIFFAFVLIAQVFLVL) form a helical membrane-spanning segment.

This sequence belongs to the cytochrome f family. As to quaternary structure, the 4 large subunits of the cytochrome b6-f complex are cytochrome b6, subunit IV (17 kDa polypeptide, petD), cytochrome f and the Rieske protein, while the 4 small subunits are PetG, PetL, PetM and PetN. The complex functions as a dimer. The cofactor is heme.

Its subcellular location is the plastid. It is found in the chloroplast thylakoid membrane. In terms of biological role, component of the cytochrome b6-f complex, which mediates electron transfer between photosystem II (PSII) and photosystem I (PSI), cyclic electron flow around PSI, and state transitions. The sequence is that of Cytochrome f from Nephroselmis olivacea (Green alga).